The following is a 392-amino-acid chain: MEVVAGCYEQVLFGFAVHPEPVGDGHRERWAPVADFTHHAHTASLSAVAVNSRFVVTGSKDETIHIYDMKKKVDHGALMHHNGTITCLKFHGNRHLISGAEDGLICVWDARRWECLKSIRAHKGHVTFLSIHPSGRLALSVGTDKTLRTWNLVEGRSAFIKNIKQSAHIVEWSPKGEKYVVVILNRIDVYQLDTASVSGTITNERRVSSVTFLSESVLTVAGDEEVVRFFDCDSLTCLSEFKAHENRVKDMFSFETPEHHVLVTASSDGFIKMWKLKQDKKVSPSLLCEINTNARLTCLGVWLDRRTDTKESPPAAAEPAPVSKEQSRRNKEESGHAVQEEEKQPKPDTEKCSLTGDSNKPTRGNSLVSAKKRKTVEMLEKKRKKKKIRMMQ.

WD repeat units lie at residues 40 to 77 (AHTA…DHGA), 80 to 118 (HHNG…CLKS), 121 to 160 (AHKG…SAFI), 202 to 240 (TNER…CLSE), and 243 to 284 (AHEN…KVSP). Residues 309-392 (TKESPPAAAE…RKKKKIRMMQ (84 aa)) are disordered. Residues 325–351 (EQSRRNKEESGHAVQEEEKQPKPDTEK) are compositionally biased toward basic and acidic residues. Over residues 355–368 (TGDSNKPTRGNSLV) the composition is skewed to polar residues. Over residues 381–392 (KKRKKKKIRMMQ) the composition is skewed to basic residues.

Interacts with PAK1.

It localises to the nucleus. Its subcellular location is the nucleolus. Functionally, negatively regulates the PAK1 kinase. PAK1 is a member of the PAK kinase family, which has been shown to play a positive role in the regulation of signaling pathways involving MAPK8 and RELA. PAK1 exists as an inactive homodimer, which is activated by binding of small GTPases such as CDC42 to an N-terminal regulatory domain. PAK1IP1 also binds to the N-terminus of PAK1, and inhibits the specific activation of PAK1 by CDC42. May be involved in ribosomal large subunit assembly. The sequence is that of p21-activated protein kinase-interacting protein 1 (PAK1IP1) from Bos taurus (Bovine).